A 633-amino-acid chain; its full sequence is 1-deoxy-D-xylulose-5-phosphate synthase (633 aa).

Residues His74 and 115–117 (GHA) each bind thiamine diphosphate. Position 146 (Asp146) interacts with Mg(2+). Thiamine diphosphate is bound by residues 147 to 148 (GA), Asn175, Tyr286, and Glu363. Asn175 is a Mg(2+) binding site.

The protein belongs to the transketolase family. DXPS subfamily. Homodimer. Mg(2+) is required as a cofactor. Thiamine diphosphate serves as cofactor.

The catalysed reaction is D-glyceraldehyde 3-phosphate + pyruvate + H(+) = 1-deoxy-D-xylulose 5-phosphate + CO2. The protein operates within metabolic intermediate biosynthesis; 1-deoxy-D-xylulose 5-phosphate biosynthesis; 1-deoxy-D-xylulose 5-phosphate from D-glyceraldehyde 3-phosphate and pyruvate: step 1/1. Functionally, catalyzes the acyloin condensation reaction between C atoms 2 and 3 of pyruvate and glyceraldehyde 3-phosphate to yield 1-deoxy-D-xylulose-5-phosphate (DXP). This Dehalococcoides mccartyi (strain ATCC BAA-2100 / JCM 16839 / KCTC 5957 / BAV1) protein is 1-deoxy-D-xylulose-5-phosphate synthase.